The primary structure comprises 96 residues: Integration host factor subunit beta (96 aa).

Residues 59-86 (RVGRNPKTGETVELDGKHVPHFKPGKEL) are disordered. The span at 72-86 (LDGKHVPHFKPGKEL) shows a compositional bias: basic and acidic residues.

It belongs to the bacterial histone-like protein family. In terms of assembly, heterodimer of an alpha and a beta chain.

This protein is one of the two subunits of integration host factor, a specific DNA-binding protein that functions in genetic recombination as well as in transcriptional and translational control. This chain is Integration host factor subunit beta, found in Pseudoalteromonas atlantica (strain T6c / ATCC BAA-1087).